Consider the following 311-residue polypeptide: Tricarboxylate transport protein, mitochondrial (311 aa).

Positions methionine 1–alanine 13 are cleaved as a propeptide — removed in mature form. Residues methionine 1 to lysine 21 form a disordered region. Solcar repeat units follow at residues threonine 23 to histidine 111, arginine 122 to tryptophan 208, and methionine 218 to leucine 303. A run of 3 helical transmembrane segments spans residues isoleucine 29–threonine 46, glycine 86–phenylalanine 105, and leucine 129–methionine 143. Serine 156 bears the Phosphoserine mark. The next 3 helical transmembrane spans lie at glycine 183 to methionine 202, glycine 224 to leucine 241, and glycine 278 to tyrosine 297.

The protein belongs to the mitochondrial carrier (TC 2.A.29) family. Post-translationally, possesses a short cleavable presequence, which, however, is found to be dispensable both for targeting to mitochondria and insertion into the inner membrane. However, the presequence is required to keep SLC25A1 in a soluble state and thus in an import-competent state. Mature SLC25A1 lacking the presequence is prone to aggregation. In terms of tissue distribution, expressed minimally but ubiquitously throughout the adult brain. Detected at higher levels in the olfactory bulb, neocortex and cerebellum. Also expressed in a subset of large cells in the globus pallidus.

The protein localises to the mitochondrion inner membrane. It is found in the mitochondrion membrane. It carries out the reaction (S)-malate(in) + citrate(out) = (S)-malate(out) + citrate(in). The catalysed reaction is D-threo-isocitrate(in) + citrate(out) = D-threo-isocitrate(out) + citrate(in). It catalyses the reaction citrate(out) + succinate(in) = citrate(in) + succinate(out). The enzyme catalyses cis-aconitate(in) + citrate(out) = cis-aconitate(out) + citrate(in). It carries out the reaction trans-aconitate(in) + citrate(out) = trans-aconitate(out) + citrate(in). The catalysed reaction is phosphoenolpyruvate(in) + citrate(out) = phosphoenolpyruvate(out) + citrate(in). It catalyses the reaction maleate(in) + citrate(out) = maleate(out) + citrate(in). Its function is as follows. Mitochondrial electroneutral antiporter that exports citrate from the mitochondria into the cytosol in exchange for malate. Also able to mediate the exchange of citrate for isocitrate, phosphoenolpyruvate, cis-aconitate and to a lesser extent trans-aconitate, maleate and succinate. In the cytoplasm, citrate plays important roles in fatty acid and sterol synthesis, regulation of glycolysis, protein acetylation, and other physiopathological processes. This chain is Tricarboxylate transport protein, mitochondrial, found in Mus musculus (Mouse).